Here is a 180-residue protein sequence, read N- to C-terminus: NADH-quinone oxidoreductase subunit I (180 aa).

4Fe-4S ferredoxin-type domains lie at 48-80 (IVLT…LQKA) and 90-119 (EFFR…LTPD). 8 residues coordinate [4Fe-4S] cluster: C60, C63, C66, C70, C99, C102, C105, and C109.

This sequence belongs to the complex I 23 kDa subunit family. NDH-1 is composed of 13 different subunits. Subunits NuoA, H, J, K, L, M, N constitute the membrane sector of the complex. It depends on [4Fe-4S] cluster as a cofactor.

The protein resides in the cell inner membrane. The enzyme catalyses a quinone + NADH + 5 H(+)(in) = a quinol + NAD(+) + 4 H(+)(out). In terms of biological role, NDH-1 shuttles electrons from NADH, via FMN and iron-sulfur (Fe-S) centers, to quinones in the respiratory chain. The immediate electron acceptor for the enzyme in this species is believed to be ubiquinone. Couples the redox reaction to proton translocation (for every two electrons transferred, four hydrogen ions are translocated across the cytoplasmic membrane), and thus conserves the redox energy in a proton gradient. This Cronobacter sakazakii (strain ATCC BAA-894) (Enterobacter sakazakii) protein is NADH-quinone oxidoreductase subunit I.